Consider the following 344-residue polypeptide: MRIVLGIESSCDETAAALVATDRTILAQHIASQDEAHAPYGGVVPEIAARAHAERLAPMIEAVMQEAGVDYADLDAIAATAGPGLIGGVMVGLVSAKAIAMAAGKPLIAINHLEGHALSSRLADSELEFPYALLLVSGGHCQILLVEGVGQYRRLATTIDDALGEAFDKTAKILGLGYPGGPAVEKLARDGDAQAVPLPRPMLGSAEPHFSFAGLKSAVLRAKESGDHEDADIAASFQQAAVDCILDRLQVALGGDDWPPALVVAGGVAANQTIRAALEGFAADRSMRFVAPPLALCTDNAAMIGWAGCERLDLEQDDPLDFRARPRWPLDPEAEPVRGAGVKA.

2 residues coordinate Fe cation: His112 and His116. Substrate-binding positions include Leu135 to Gly139, Asp168, Gly181, and Asn271. Fe cation is bound at residue Asp299. Positions Arg323 to Ala344 are disordered.

The protein belongs to the KAE1 / TsaD family. Fe(2+) is required as a cofactor.

The protein localises to the cytoplasm. The catalysed reaction is L-threonylcarbamoyladenylate + adenosine(37) in tRNA = N(6)-L-threonylcarbamoyladenosine(37) in tRNA + AMP + H(+). Functionally, required for the formation of a threonylcarbamoyl group on adenosine at position 37 (t(6)A37) in tRNAs that read codons beginning with adenine. Is involved in the transfer of the threonylcarbamoyl moiety of threonylcarbamoyl-AMP (TC-AMP) to the N6 group of A37, together with TsaE and TsaB. TsaD likely plays a direct catalytic role in this reaction. The polypeptide is tRNA N6-adenosine threonylcarbamoyltransferase (Erythrobacter litoralis (strain HTCC2594)).